The primary structure comprises 2009 residues: Sodium channel protein type 1 subunit alpha (2009 aa).

The Cytoplasmic portion of the chain corresponds to 1–128; sequence MEQTVLVPPG…KIAIKILVHS (128 aa). Positions 28–48 are enriched in basic and acidic residues; the sequence is RIAEEKAKNPKPDKKDDDENG. Residues 28–60 are disordered; sequence RIAEEKAKNPKPDKKDDDENGPKPNSDLEAGKN. An I repeat occupies 110 to 454; that stretch reads ILTPFNPLRK…QQMIEQLKKQ (345 aa). A helical transmembrane segment spans residues 129–146; sequence LFSMLIMCTILTNCVFMT. The Extracellular segment spans residues 147-152; that stretch reads MSNPPD. A helical membrane pass occupies residues 153 to 177; the sequence is WTKNVEYTFTGIYTFESLIKIIARG. At 178–188 the chain is on the cytoplasmic side; it reads FCLEDFTFLRD. The chain crosses the membrane as a helical span at residues 189 to 205; that stretch reads PWNWLDFTVITFAYVTE. Residues 206 to 213 lie on the Extracellular side of the membrane; sequence FVDLGNVS. Asn-211 carries an N-linked (GlcNAc...) asparagine glycan. The chain crosses the membrane as a helical span at residues 214-235; the sequence is ALRTFRVLRALKTISVIPGLKT. The Cytoplasmic segment spans residues 236–245; it reads IVGALIQSVK. Residues 246 to 269 form a helical membrane-spanning segment; sequence KLSDVMILTVFCLSVFALIGLQLF. Residues 270-369 lie on the Extracellular side of the membrane; sequence MGNLRNKCIQ…YGYTSFDTFS (100 aa). Cystine bridges form between Cys-277-Cys-345 and Cys-336-Cys-351. N-linked (GlcNAc...) asparagine glycosylation is found at Asn-284, Asn-295, Asn-301, Asn-306, and Asn-338. An intramembrane region (pore-forming) is located at residues 370–384; the sequence is WAFLSLFRLMTQDFW. Residues 385–397 are Extracellular-facing; that stretch reads ENLYQLTLRAAGK. A helical membrane pass occupies residues 398–423; it reads TYMIFFVLVIFLGSFYLINLILAVVA. Residues 424 to 768 are Cytoplasmic-facing; that stretch reads MAYEEQNQAT…HVVNLVVMDP (345 aa). The interval 455–529 is disordered; sequence QEAAQQAATA…FQKSESEDSI (75 aa). Residues 456–466 are compositionally biased toward low complexity; that stretch reads EAAQQAATATA. Ser-470 is modified (phosphoserine). A compositionally biased stretch (low complexity) spans 479 to 492; the sequence is LSDSSSEASKLSSK. Residues 495–506 show a composition bias toward basic residues; sequence KERRNRRKKRKQ. The span at 520–529 shows a compositional bias: basic and acidic residues; the sequence is FQKSESEDSI. Phosphoserine occurs at positions 523, 525, 550, 551, 607, and 730. A disordered region spans residues 584 to 627; that stretch reads VGSENDFADDEHSTFEDNESRRDSLFVPRRHGERRNSNLSQTSR. The segment covering 593-607 has biased composition (basic and acidic residues); sequence DEHSTFEDNESRRDS. One copy of the II repeat lies at 750–1022; sequence CSPYWLKVKH…QIAVDRMHKG (273 aa). A helical membrane pass occupies residues 769–787; sequence FVDLAITICIVLNTLFMAM. At 788–797 the chain is on the extracellular side; that stretch reads EHYPMTDHFN. Residues 798–820 form a helical membrane-spanning segment; the sequence is NVLTVGNLVFTGIFTAEMFLKII. Residues 821 to 830 are Cytoplasmic-facing; it reads AMDPYYYFQE. A helical membrane pass occupies residues 831–849; that stretch reads GWNIFDGFIVTLSLVELGL. Over 850–854 the chain is Extracellular; that stretch reads ANVEG. Residues 855 to 874 form a helical membrane-spanning segment; the sequence is LSVLRSFRLLRVFKLAKSWP. Over 875 to 891 the chain is Cytoplasmic; the sequence is TLNMLIKIIGNSVGALG. The helical transmembrane segment at 892 to 912 threads the bilayer; it reads NLTLVLAIIVFIFAVVGMQLF. At 913–938 the chain is on the extracellular side; it reads GKSYKDCVCKIASDCQLPRWHMNDFF. A disulfide bridge connects residues Cys-921 and Cys-927. An intramembrane region (pore-forming) is located at residues 939 to 952; the sequence is HSFLIVFRVLCGEW. At 953 to 965 the chain is on the extracellular side; sequence IETMWDCMEVAGQ. Cys-959 and Cys-968 are disulfide-bonded. Residues 966–992 form a helical membrane-spanning segment; it reads AMCLTVFMMVMVIGNLVVLNLFLALLL. Over 993 to 1218 the chain is Cytoplasmic; the sequence is SSFSADNLAA…RTCFRIVEHN (226 aa). Residues 1129–1163 form a disordered region; that stretch reads TEDFSSESDLEESKEKLNESSSSSEGSTVDIGAPV. The III repeat unit spans residues 1200-1514; that stretch reads RGKQWWNLRR…KKYYNAMKKL (315 aa). A helical transmembrane segment spans residues 1219–1237; the sequence is WFETFIVFMILLSSGALAF. Over 1238–1250 the chain is Extracellular; that stretch reads EDIYIDQRKTIKT. A helical membrane pass occupies residues 1251–1276; it reads MLEYADKVFTYIFILEMLLKWVAYGY. Topologically, residues 1277–1278 are cytoplasmic; that stretch reads QT. The chain crosses the membrane as a helical span at residues 1279–1304; that stretch reads YFTNAWCWLDFLIVDVSLVSLTANAL. Residues 1305–1313 lie on the Extracellular side of the membrane; the sequence is GYSELGAIK. The chain crosses the membrane as a helical span at residues 1314-1332; it reads SLRTLRALRPLRALSRFEG. At 1333–1345 the chain is on the cytoplasmic side; the sequence is MRVVVNALLGAIP. Residues 1346 to 1369 traverse the membrane as a helical segment; the sequence is SIMNVLLVCLIFWLIFSIMGVNLF. The Extracellular portion of the chain corresponds to 1370-1415; sequence AGKFYHCINTTTGDRFDIEDVNNHTDCLKLIERNETARWKNVKVNF. A disulfide bridge connects residues Cys-1376 and Cys-1396. 3 N-linked (GlcNAc...) asparagine glycosylation sites follow: Asn-1378, Asn-1392, and Asn-1403. Positions 1416–1433 form an intramembrane region, pore-forming; sequence DNVGFGYLSLLQVATFKG. Over 1434-1457 the chain is Extracellular; that stretch reads WMDIMYAAVDSRNVELQPKYEESL. A helical membrane pass occupies residues 1458–1483; sequence YMYLYFVIFIIFGSFFTLNLFIGVII. At 1484-1541 the chain is on the cytoplasmic side; it reads DNFNQQKKKFGGQDIFMTEEQKKYYNAMKKLGSKKPQKPIPRPGNKFQGMVFDFVTRQ. Ser-1516 is subject to Phosphoserine; by PKC. The stretch at 1523-1821 is one IV repeat; sequence IPRPGNKFQG…WEKFDPDATQ (299 aa). The chain crosses the membrane as a helical span at residues 1542–1560; the sequence is VFDISIMILICLNMVTMMV. Residues 1561 to 1571 are Extracellular-facing; sequence ETDDQSEYVTT. The interval 1561-1571 is S1-S2 loop of repeat IV; it reads ETDDQSEYVTT. Residues 1572-1593 form a helical membrane-spanning segment; that stretch reads ILSRINLVFIVLFTGECVLKLI. The Cytoplasmic segment spans residues 1594-1601; it reads SLRHYYFT. The helical transmembrane segment at 1602–1623 threads the bilayer; that stretch reads IGWNIFDFVVVILSIVGMFLAE. The S3b-S4 loop of repeat IV stretch occupies residues 1619–1636; it reads MFLAELIEKYFVSPTLFR. Over 1624–1636 the chain is Extracellular; that stretch reads LIEKYFVSPTLFR. Residues 1637–1655 form a helical membrane-spanning segment; it reads VIRLARIGRILRLIKGAKG. The Cytoplasmic segment spans residues 1656–1665; that stretch reads IRTLLFALMM. A helical membrane pass occupies residues 1666–1688; the sequence is SLPALFNIGLLLFLVMFIYAIFG. Topologically, residues 1689-1711 are extracellular; that stretch reads MSNFAYVKREVGIDDMFNFETFG. The segment at residues 1712 to 1726 is an intramembrane region (pore-forming); that stretch reads NSMICLFQITTSAGW. Residues 1727-1759 are Extracellular-facing; that stretch reads DGLLAPILNSKPPDCDPNKVNPGSSVKGDCGNP. The cysteines at positions 1741 and 1756 are disulfide-linked. A helical membrane pass occupies residues 1760–1788; that stretch reads SVGIFFFVSYIIISFLVVVNMYIAVILEN. Topologically, residues 1789 to 2009 are cytoplasmic; that stretch reads FSVATEESAE…EGKDEKAKGK (221 aa). In terms of domain architecture, IQ spans 1915-1944; sequence EEVSAVIIQRAYRRHLLKRTVKQASFTYNK. The segment at 1986–2009 is disordered; sequence YDRVTKPIVEKHEQEGKDEKAKGK. Over residues 1988–2009 the composition is skewed to basic and acidic residues; the sequence is RVTKPIVEKHEQEGKDEKAKGK.

This sequence belongs to the sodium channel (TC 1.A.1.10) family. Nav1.1/SCN1A subfamily. The Nav1.1 voltage-gated sodium channel consists of an ion-conducting alpha subunit SCN1A which is functional on its own regulated by one or more beta-1 (SCN1B), beta-2 (SCN2B), beta-3 (SCN3B) and beta-4 (SCN4B) subunits. SCN1B and SCN3B are non-covalently associated with SCN1A. SCN2B and SCN4B are disulfide-linked to SCN1A. SCN1B regulates both the expression at the plasma membrane and the voltage dependence of Nav1.1 inactivation. SCN3B and SCN4B reduce Nav1.1 conductance. Probably interacts with TMEM233; modulates the gating properties of NaV1.1. Interacts with FGF13; regulates the steady-state inactivation of Nav.1.1. Post-translationally, phosphorylation at Ser-1516 by PKC in a highly conserved cytoplasmic loop slows inactivation of the sodium channel and reduces peak sodium currents.

It localises to the cell membrane. The catalysed reaction is Na(+)(in) = Na(+)(out). Its activity is regulated as follows. Activated by the spider toxins Hm1a and Hm1b (H.maculata, AC P60992 and AC P0DOC5) eliciting acute pain and mechanical allodynia. Inhibited by the conotoxin GVIIJ. Inhibited by the spider beta/delta-theraphotoxin-Pre1a. Its function is as follows. Pore-forming subunit of Nav1.1, a voltage-gated sodium (Nav) channel that directly mediates the depolarizing phase of action potentials in excitable membranes. Navs, also called VGSCs (voltage-gated sodium channels) or VDSCs (voltage-dependent sodium channels), operate by switching between closed and open conformations depending on the voltage difference across the membrane. In the open conformation they allow Na(+) ions to selectively pass through the pore, along their electrochemical gradient. The influx of Na(+) ions provokes membrane depolarization, initiating the propagation of electrical signals throughout cells and tissues. By regulating the excitability of neurons, ensures that they respond appropriately to synaptic inputs, maintaining the balance between excitation and inhibition in brain neural circuits. Nav1.1 plays a role in controlling the excitability and action potential propagation from somatosensory neurons, thereby contributing to the sensory perception of mechanically-induced pain. The sequence is that of Sodium channel protein type 1 subunit alpha from Homo sapiens (Human).